Here is a 168-residue protein sequence, read N- to C-terminus: Protein C2-DOMAIN ABA-RELATED 3 (168 aa).

The 106-residue stretch at 1–106 (MSLMDNLLGI…IEALRMELSG (106 aa)) folds into the C2 domain. Positions 24, 25, 30, 76, 77, 78, and 84 each coordinate Ca(2+).

This sequence belongs to the plant CAR protein family. As to quaternary structure, binds to PYR/PYL/RCAR abscisic acid intracellular receptors in an ABA-independent manner, both at the plasma membrane and in the nucleus. Requires Ca(2+) as cofactor.

It is found in the cell membrane. Its subcellular location is the nucleus. Stimulates the GTPase/ATPase activities of Obg-like ATPases. Mediates the transient calcium-dependent interaction of PYR/PYL/RCAR abscisic acid (ABA) receptors with the plasma membrane and thus regulates ABA sensitivity. The chain is Protein C2-DOMAIN ABA-RELATED 3 from Arabidopsis thaliana (Mouse-ear cress).